A 469-amino-acid chain; its full sequence is 3-isopropylmalate dehydratase large subunit (469 aa).

Positions 347, 407, and 410 each coordinate [4Fe-4S] cluster.

This sequence belongs to the aconitase/IPM isomerase family. LeuC type 1 subfamily. Heterodimer of LeuC and LeuD. Requires [4Fe-4S] cluster as cofactor.

It catalyses the reaction (2R,3S)-3-isopropylmalate = (2S)-2-isopropylmalate. It functions in the pathway amino-acid biosynthesis; L-leucine biosynthesis; L-leucine from 3-methyl-2-oxobutanoate: step 2/4. Its function is as follows. Catalyzes the isomerization between 2-isopropylmalate and 3-isopropylmalate, via the formation of 2-isopropylmaleate. This chain is 3-isopropylmalate dehydratase large subunit, found in Prochlorococcus marinus (strain NATL1A).